The primary structure comprises 99 residues: UPF0386 protein mll0189 (99 aa).

The protein belongs to the UPF0386 family.

This is UPF0386 protein mll0189 from Mesorhizobium japonicum (strain LMG 29417 / CECT 9101 / MAFF 303099) (Mesorhizobium loti (strain MAFF 303099)).